The following is a 457-amino-acid chain: Argininosuccinate lyase (457 aa).

The protein belongs to the lyase 1 family. Argininosuccinate lyase subfamily.

The protein localises to the cytoplasm. It catalyses the reaction 2-(N(omega)-L-arginino)succinate = fumarate + L-arginine. It functions in the pathway amino-acid biosynthesis; L-arginine biosynthesis; L-arginine from L-ornithine and carbamoyl phosphate: step 3/3. This is Argininosuccinate lyase from Pectobacterium atrosepticum (strain SCRI 1043 / ATCC BAA-672) (Erwinia carotovora subsp. atroseptica).